A 1251-amino-acid chain; its full sequence is MSTERDSETTFDEDSQPNDEVVPYSDDETEDELDDQGSAVEPEQNRVNREAEENREPFRKECTWQVKANDRKYHEQPHFMNTKFLCIKESKYANNAIKTYKYNAFTFIPMNLFEQFKRAANLYFLALLILQAVPQISTLAWYTTLVPLLVVLGVTAIKDLVDDVARHKMDKEINNRTCEVIKDGRFKVAKWKEIQVGDVIRLKKNDFVPADILLLSSSEPNSLCYVETAELDGETNLKFKMSLEITDQYLQREDTLATFDGFIECEEPNNRLDKFTGTLFWRNTSFPLDADKILLRGCVIRNTDFCHGLVIFAGADTKIMKNSGKTRFKRTKIDYLMNYMVYTIFVVLILLSAGLAIGHAYWEAQVGNSSWYLYDGEDDTPSYRGFLIFWGYIIVLNTMVPISLYVSVEVIRLGQSHFINWDLQMYYAEKDTPAKARTTTLNEQLGQIHYIFSDKTGTLTQNIMTFKKCCINGQIYGDHRDASQHNHNKIEQVDFSWNTYADGKLAFYDHYLIEQIQSGKEPEVRQFFFLLAVCHTVMVDRTDGQLNYQAASPDEGALVNAARNFGFAFLARTQNTITISELGTERTYNVLAILDFNSDRKRMSIIVRTPEGNIKLYCKGADTVIYERLHRMNPTKQETQDALDIFANETLRTLCLCYKEIEEKEFTEWNKKFMAASVASTNRDEALDKVYEEIEKDLILLGATAIEDKLQDGVPETISKLAKADIKIWVLTGDKKETAENIGFACELLTEDTTICYGEDINSLLHARMENQRNRGGVYAKFAPPVQESFFPPGGNRALIITGSWLNEILLEKKTKRNKILKLKFPRTEEERRMRTQSKRRLEAKKEQRQKNFVDLACECSAVICCRVTPKQKAMVVDLVKRYKKAITLAIGDGANDVNMIKTAHIGVGISGQEGMQAVMSSDYSFAQFRYLQRLLLVHGRWSYIRMCKFLRYFFYKNFAFTLVHFWYSFFNGYSAQTAYEDWFITLYNVLYTSLPVLLMGLLDQDVSDKLSLRFPGLYIVGQRDLLFNYKRFFVSLLHGVLTSMILFFIPLGAYLQTVGQDGEAPSDYQSFAVTIASALVITVNFQIGLDTSYWTFVNAFSIFGSIALYFGIMFDFHSAGIHVLFPSAFQFTGTASNALRQPYIWLTIILAVAVCLLPVVAIRFLSMTIWPSESDKIQKHRKRLKAEEQWQRRQQVFRRGVSTRRSAYAFSHQRGYADLISSGRSIRKKRSPLDAIVADGTAEYRRTGDS.

The segment at 1 to 54 (MSTERDSETTFDEDSQPNDEVVPYSDDETEDELDDQGSAVEPEQNRVNREAEEN) is disordered. Residues 1 to 108 (MSTERDSETT…TYKYNAFTFI (108 aa)) are Cytoplasmic-facing. The segment covering 25-35 (SDDETEDELDD) has biased composition (acidic residues). Residues 43–54 (EQNRVNREAEEN) are compositionally biased toward basic and acidic residues. A helical membrane pass occupies residues 109–130 (PMNLFEQFKRAANLYFLALLIL). At 131-136 (QAVPQI) the chain is on the exoplasmic loop side. The chain crosses the membrane as a helical span at residues 137–156 (STLAWYTTLVPLLVVLGVTA). At 157–340 (IKDLVDDVAR…TKIDYLMNYM (184 aa)) the chain is on the cytoplasmic side. Residues 341–362 (VYTIFVVLILLSAGLAIGHAYW) traverse the membrane as a helical segment. The Exoplasmic loop segment spans residues 363 to 389 (EAQVGNSSWYLYDGEDDTPSYRGFLIF). Residues 390–411 (WGYIIVLNTMVPISLYVSVEVI) traverse the membrane as a helical segment. Residues 412 to 949 (RLGQSHFINW…GRWSYIRMCK (538 aa)) are Cytoplasmic-facing. Asp-454 (4-aspartylphosphate intermediate) is an active-site residue. ATP contacts are provided by Asp-454, Lys-455, Thr-456, Glu-555, Phe-596, Lys-619, Arg-652, Thr-732, Gly-733, Asp-734, Arg-867, and Lys-873. Residue Asp-454 participates in Mg(2+) binding. Thr-456 is a binding site for Mg(2+). Asp-893 provides a ligand contact to Mg(2+). ATP is bound by residues Asn-896 and Asp-897. Asp-897 lines the Mg(2+) pocket. A helical transmembrane segment spans residues 950–970 (FLRYFFYKNFAFTLVHFWYSF). The Exoplasmic loop segment spans residues 971 to 982 (FNGYSAQTAYED). Residues 983 to 1002 (WFITLYNVLYTSLPVLLMGL) form a helical membrane-spanning segment. The Cytoplasmic segment spans residues 1003-1032 (LDQDVSDKLSLRFPGLYIVGQRDLLFNYKR). The chain crosses the membrane as a helical span at residues 1033–1054 (FFVSLLHGVLTSMILFFIPLGA). The Exoplasmic loop portion of the chain corresponds to 1055–1068 (YLQTVGQDGEAPSD). A helical transmembrane segment spans residues 1069 to 1091 (YQSFAVTIASALVITVNFQIGLD). Residues 1092–1097 (TSYWTF) are Cytoplasmic-facing. A helical transmembrane segment spans residues 1098–1118 (VNAFSIFGSIALYFGIMFDFH). The Exoplasmic loop portion of the chain corresponds to 1119-1138 (SAGIHVLFPSAFQFTGTASN). Residues 1139–1163 (ALRQPYIWLTIILAVAVCLLPVVAI) form a helical membrane-spanning segment. The Cytoplasmic portion of the chain corresponds to 1164–1251 (RFLSMTIWPS…TAEYRRTGDS (88 aa)). A Phosphoserine modification is found at Ser-1223.

The protein belongs to the cation transport ATPase (P-type) (TC 3.A.3) family. Type IV subfamily. In terms of assembly, component of a P4-ATPase flippase complex which consists of a catalytic alpha subunit ATP8B1 and an accessory beta subunit TMEM30A. The flippase ATP8B1:TMEM30A complex can form an intermediate phosphoenzyme in vitro. Also interacts with beta subunit TMEM30B. Requires Mg(2+) as cofactor. Found in most tissues except brain and skeletal muscle. Most abundant in pancreas and small intestine.

Its subcellular location is the cell membrane. It localises to the apical cell membrane. The protein resides in the cell projection. The protein localises to the stereocilium. It is found in the endoplasmic reticulum. Its subcellular location is the golgi apparatus. The enzyme catalyses ATP + H2O + phospholipidSide 1 = ADP + phosphate + phospholipidSide 2.. It carries out the reaction a 1,2-diacyl-sn-glycero-3-phosphocholine(out) + ATP + H2O = a 1,2-diacyl-sn-glycero-3-phosphocholine(in) + ADP + phosphate + H(+). It catalyses the reaction a 1,2-diacyl-sn-glycero-3-phospho-L-serine(out) + ATP + H2O = a 1,2-diacyl-sn-glycero-3-phospho-L-serine(in) + ADP + phosphate + H(+). Catalytic component of a P4-ATPase flippase complex which catalyzes the hydrolysis of ATP coupled to the transport of phospholipids, in particular phosphatidylcholines (PC), from the outer to the inner leaflet of the plasma membrane. May participate in the establishment of the canalicular membrane integrity by ensuring asymmetric distribution of phospholipids in the canicular membrane. Thus may have a role in the regulation of bile acids transport into the canaliculus, uptake of bile acids from intestinal contents into intestinal mucosa or both and protect hepatocytes from bile salts. Involved in the microvillus formation in polarized epithelial cells; the function seems to be independent from its flippase activity. Participates in correct apical membrane localization of CDC42, CFTR and SLC10A2. Enables CDC42 clustering at the apical membrane during enterocyte polarization through the interaction between CDC42 polybasic region and negatively charged membrane lipids provided by ATP8B1. Together with TMEM30A is involved in uptake of the synthetic drug alkylphospholipid perifosine. Required for the preservation of cochlear hair cells in the inner ear. May act as cardiolipin transporter during inflammatory injury. The polypeptide is Phospholipid-transporting ATPase IC (Homo sapiens (Human)).